The sequence spans 93 residues: Cell division topological specificity factor (93 aa).

This sequence belongs to the MinE family.

Functionally, prevents the cell division inhibition by proteins MinC and MinD at internal division sites while permitting inhibition at polar sites. This ensures cell division at the proper site by restricting the formation of a division septum at the midpoint of the long axis of the cell. The sequence is that of Cell division topological specificity factor from Halorhodospira halophila (strain DSM 244 / SL1) (Ectothiorhodospira halophila (strain DSM 244 / SL1)).